A 447-amino-acid chain; its full sequence is Dihydrolipoyllysine-residue acetyltransferase component of pyruvate dehydrogenase complex (447 aa).

The Lipoyl-binding domain occupies 2–78 (PINITMPALS…KVNALIAVLA (77 aa)). Lys43 is subject to N6-lipoyllysine. The disordered stretch occupies residues 91 to 140 (GNGAAGAVPAPKPKETAETAPAAAPAPAAAPAPQAAAPASPAPADGEGKR). Residues 108–134 (ETAPAAAPAPAAAPAPQAAAPASPAPA) show a composition bias toward low complexity. The region spanning 142 to 179 (FSSPLARRLAKEAGIDLSAIAGSGPHGRVVKKDVETAV) is the Peripheral subunit-binding (PSBD) domain. His420 is a catalytic residue.

Belongs to the 2-oxoacid dehydrogenase family. In terms of assembly, forms a 24-polypeptide structural core with octahedral symmetry. Requires (R)-lipoate as cofactor.

It carries out the reaction N(6)-[(R)-dihydrolipoyl]-L-lysyl-[protein] + acetyl-CoA = N(6)-[(R)-S(8)-acetyldihydrolipoyl]-L-lysyl-[protein] + CoA. The pyruvate dehydrogenase complex catalyzes the overall conversion of pyruvate to acetyl-CoA and CO(2). It contains multiple copies of three enzymatic components: pyruvate dehydrogenase (E1), dihydrolipoamide acetyltransferase (E2) and lipoamide dehydrogenase (E3). This chain is Dihydrolipoyllysine-residue acetyltransferase component of pyruvate dehydrogenase complex (pdhC), found in Rhizobium meliloti (strain 1021) (Ensifer meliloti).